The primary structure comprises 328 residues: Oligopeptide transport ATP-binding protein AppD (328 aa).

The ABC transporter domain maps to Leu-5–Leu-256. ATP is bound at residue Gly-41–Ser-48.

This sequence belongs to the ABC transporter superfamily.

It localises to the cell membrane. In terms of biological role, this protein is a component of an oligopeptide permease, a binding protein-dependent transport system. This APP system can completely substitute for the OPP system in both sporulation and genetic competence, though, unlike OPP, is incapable of transporting tripeptides. Probably responsible for energy coupling to the transport system. This is Oligopeptide transport ATP-binding protein AppD (appD) from Bacillus subtilis (strain 168).